The primary structure comprises 548 residues: Glucose-6-phosphate isomerase (548 aa).

Catalysis depends on Glu355, which acts as the Proton donor. Residues His386 and Lys514 contribute to the active site.

The protein belongs to the GPI family.

It is found in the cytoplasm. It carries out the reaction alpha-D-glucose 6-phosphate = beta-D-fructose 6-phosphate. It participates in carbohydrate biosynthesis; gluconeogenesis. Its pathway is carbohydrate degradation; glycolysis; D-glyceraldehyde 3-phosphate and glycerone phosphate from D-glucose: step 2/4. Its function is as follows. Catalyzes the reversible isomerization of glucose-6-phosphate to fructose-6-phosphate. The polypeptide is Glucose-6-phosphate isomerase (Yersinia enterocolitica serotype O:8 / biotype 1B (strain NCTC 13174 / 8081)).